The sequence spans 614 residues: Sodium- and chloride-dependent betaine transporter (614 aa).

Topologically, residues 1 to 44 are cytoplasmic; it reads MDRKVAVHEDGYPVVSWVPEEGEMMDQKGKDQVKDRGQWTNKME. Helical transmembrane passes span 45–65, 73–92, and 117–137; these read FVLSVAGEIIGLGNVWRFPYL, AFFIPYFIFFFSCGIPVFFL, and GIGMASVVIESYLNIYYIIIL. Residues 138-210 lie on the Extracellular side of the membrane; sequence AWALFYLFSS…SGIHDLGSLR (73 aa). Residues Cys-157 and Cys-166 are joined by a disulfide bond. 2 N-linked (GlcNAc...) asparagine glycosylation sites follow: Asn-171 and Asn-183. The next 9 helical transmembrane spans lie at 211–229, 238–255, 291–308, 320–341, 374–393, 423–441, 458–478, 499–518, and 538–556; these read WELALCLLLAWIICYFCIW, VVYFTATFPYLMLIILLI, IFFSFAICQGCLTALGSY, IALCFLNSATSFVAGFVVFSIL, MPLSQLWSCLFFIMLLFLGL, VLILAISVLCYLMGLLLVT, GICLLFLSLFEVICIGWVYGA, ISWLFLTPGLCLATFFFSLS, and IGWLLAFSSMACVPLFIII. Topologically, residues 557-614 are cytoplasmic; sequence TFLKTQGSFKKRLRRLITPDPSLPQPGRRPPQDGSSAQNCSSSPAKQELIAWEKETHL. The segment at 574–602 is disordered; sequence TPDPSLPQPGRRPPQDGSSAQNCSSSPAK. Polar residues predominate over residues 589-601; sequence DGSSAQNCSSSPA.

It belongs to the sodium:neurotransmitter symporter (SNF) (TC 2.A.22) family. SLC6A12 subfamily. In terms of assembly, interacts with LIN7C. In terms of tissue distribution, predominantly expressed in the liver (sinusoidal hepatocyte plasma membranes), also present in the renal medulla, where it localizes to the basolateral membranes of collecting ducts (particularly at the papilla tip) and the thick ascending limbs of Henle (at protein level). Some expression is detected in the leptomeninges, but no expression is detected in brain parenchyma, brain blood vessels, ependymal cells, the renal cortex and the intestine.

The protein localises to the basolateral cell membrane. The protein resides in the cell membrane. The enzyme catalyses 4-aminobutanoate(out) + chloride(out) + 3 Na(+)(out) = 4-aminobutanoate(in) + chloride(in) + 3 Na(+)(in). It carries out the reaction glycine betaine(out) + 2 chloride(out) + 3 Na(+)(out) = glycine betaine(in) + 2 chloride(in) + 3 Na(+)(in). Its function is as follows. Transporter that mediates cellular uptake of betaine and GABA in a sodium- and chloride-dependent process. May have a role in regulation of GABAergic transmission in the brain through the reuptake of GABA into presynaptic terminals, as well as in osmotic regulation. Probably also involved in renal and hepatic osmotic regulation. The polypeptide is Sodium- and chloride-dependent betaine transporter (Slc6a12) (Mus musculus (Mouse)).